Here is a 679-residue protein sequence, read N- to C-terminus: Altered inheritance of mitochondria protein 21 (679 aa).

Residues 1–85 (MPSEVTPKVP…LQRPVRRSTT (85 aa)) are disordered. A compositionally biased stretch (basic and acidic residues) spans 9-19 (VPERPSRRKTS). The residue at position 18 (Thr-18) is a Phosphothreonine. Phosphoserine is present on Ser-36. Thr-58 bears the Phosphothreonine mark. Phosphoserine is present on Ser-70. Residue Thr-85 is modified to Phosphothreonine. Ser-104 bears the Phosphoserine mark. Residues 110–119 (NIHNVSRKKS) show a composition bias toward basic residues. Disordered stretches follow at residues 110 to 522 (NIHN…EKIE), 549 to 580 (IDTT…PNKM), and 593 to 679 (EKLP…FHSL). Composition is skewed to polar residues over residues 133-149 (QNGQ…TNPS) and 164-178 (SAIS…SNNE). Over residues 179 to 213 (VTEHSDSEDLTEKQKVHAALDNEAGDRSHFEEKLI) the composition is skewed to basic and acidic residues. 3 positions are modified to phosphoserine: Ser-183, Ser-206, and Ser-231. Residues 243–272 (SDDKAEKFTKHPESSLEELQKHQEQQEEKI) show a composition bias toward basic and acidic residues. Thr-277 is subject to Phosphothreonine. Phosphoserine is present on Ser-284. The segment covering 296–323 (EVNSQPQGPSDTETVIAATSSNVPSQIA) has biased composition (polar residues). Phosphoserine is present on Ser-324. Composition is skewed to basic and acidic residues over residues 339 to 361 (KKDF…RVSE) and 372 to 383 (EESKIPKIPSER). The interval 383 to 396 (RPKRRAPPPVPKKP) is interaction with SH3 domain of ABP1. Polar residues-rich tracts occupy residues 414 to 427 (DLHN…TTAS) and 437 to 452 (SSIT…TSKL). The span at 471-482 (LEKKLSSPDTES) shows a compositional bias: basic and acidic residues. Residues 501–512 (RRGRGPRGRKLP) show a composition bias toward basic residues. Position 552 is a phosphothreonine (Thr-552). A compositionally biased stretch (basic and acidic residues) spans 556-576 (QAERALDEKSKSIPEEQREQS). Ser-576 is modified (phosphoserine). Over residues 603-613 (PLSQLPQTNAV) the composition is skewed to polar residues. Residues Ser-620, Ser-623, Ser-625, Ser-627, Ser-667, Ser-671, Ser-675, and Ser-678 each carry the phosphoserine modification. The span at 667-679 (SALHSEEASFHSL) shows a compositional bias: basic and acidic residues.

Belongs to the AIM21 family. Interacts with ribosomes. Interacts with ABP1.

It localises to the cytoplasm. Its subcellular location is the cytoskeleton. It is found in the actin patch. Involved in mitochondrial migration along actin filaments. The protein is Altered inheritance of mitochondria protein 21 (AIM21) of Saccharomyces cerevisiae (strain ATCC 204508 / S288c) (Baker's yeast).